The primary structure comprises 92 residues: Small ribosomal subunit protein uS19 (92 aa).

It belongs to the universal ribosomal protein uS19 family.

Its function is as follows. Protein S19 forms a complex with S13 that binds strongly to the 16S ribosomal RNA. The polypeptide is Small ribosomal subunit protein uS19 (Geobacillus sp. (strain WCH70)).